Consider the following 466-residue polypeptide: Vimentin (466 aa).

The segment covering 1 to 13 has biased composition (low complexity); the sequence is MSTRSVSSSSYRR. Residues 1 to 32 form a disordered region; that stretch reads MSTRSVSSSSYRRMFGGPGTGSRPSSTRSYVT. Ser2 is subject to N-acetylserine. The tract at residues 2-95 is head; that stretch reads STRSVSSSSY…FSLADAINTE (94 aa). 5 positions are modified to phosphoserine: Ser5, Ser7, Ser8, Ser9, and Ser10. Ser7 carries an O-linked (GlcNAc) serine; alternate glycan. At Thr20 the chain carries Phosphothreonine. Low complexity predominate over residues 21-32; the sequence is GSRPSSTRSYVT. 2 positions are modified to phosphoserine: Ser25 and Ser26. An O-linked (GlcNAc) threonine glycan is attached at Thr33. Phosphoserine is present on residues Ser34, Ser39, Ser42, Ser47, Ser49, and Ser51. O-linked (GlcNAc) serine; alternate glycosylation is present at Ser34. Tyr53 carries the phosphotyrosine modification. Phosphoserine is present on residues Ser55 and Ser56. Tyr61 is subject to Phosphotyrosine. Phosphoserine is present on residues Ser66, Ser72, Ser73, Ser83, and Ser87. The segment at 96-131 is coil 1A; it reads FKNTRTNEKVELQELNDRFANYIDKVRFLEQQNKIL. A coiled-coil region spans residues 96–131; it reads FKNTRTNEKVELQELNDRFANYIDKVRFLEQQNKIL. The IF rod domain maps to 103–411; that stretch reads EKVELQELND…KLLEGEESRI (309 aa). A Glycyl lysine isopeptide (Lys-Gly) (interchain with G-Cter in SUMO2) cross-link involves residue Lys104. Tyr117 carries the phosphotyrosine modification. Lys120, Lys129, and Lys139 each carry N6-acetyllysine; alternate. 2 positions are modified to N6-succinyllysine; alternate: Lys120 and Lys129. Glycyl lysine isopeptide (Lys-Gly) (interchain with G-Cter in SUMO2); alternate cross-links involve residues Lys120, Lys129, and Lys139. Residues 132 to 153 are linker 1; the sequence is LAELEQLKGQGKSRLGDLYEEE. Ser144 carries the post-translational modification Phosphoserine. The stretch at 154 to 245 forms a coiled coil; sequence MRELRRQVDQ…KLHDEEIQEL (92 aa). A coil 1B region spans residues 154 to 245; the sequence is MRELRRQVDQ…KLHDEEIQEL (92 aa). Lys168 carries the N6-acetyllysine modification. Lys188 carries the post-translational modification N6-acetyllysine; alternate. Residue Lys188 is modified to N6-succinyllysine; alternate. At Ser214 the chain carries Phosphoserine. Lys223 carries the N6-acetyllysine; alternate modification. A Glycyl lysine isopeptide (Lys-Gly) (interchain with G-Cter in SUMO2); alternate cross-link involves residue Lys223. A Phosphoserine modification is found at Ser226. Lys235 is modified (N6-acetyllysine). Residues 246 to 268 are linker 12; sequence QAQIQDQHVQIDMDVSKPDLTAA. Residue Lys262 forms a Glycyl lysine isopeptide (Lys-Gly) (interchain with G-Cter in SUMO2) linkage. Residues 269 to 407 are coil 2; the sequence is LRDVRQQYES…ATYRKLLEGE (139 aa). Position 294 is an N6-acetyllysine; alternate (Lys294). Lys294 bears the N6-succinyllysine; alternate mark. A Glycyl lysine isopeptide (Lys-Gly) (interchain with G-Cter in SUMO2); alternate cross-link involves residue Lys294. Phosphoserine is present on Ser299. Residues 303–407 adopt a coiled-coil conformation; it reads NRNNDALRQA…ATYRKLLEGE (105 aa). A Glycyl lysine isopeptide (Lys-Gly) (interchain with G-Cter in SUMO2) cross-link involves residue Lys313. The residue at position 325 (Ser325) is a Phosphoserine. The short motif at 326 to 329 is the [IL]-x-C-x-x-[DE] motif element; it reads LTCE. At Lys373 the chain carries N6-acetyllysine; alternate. Residue Lys373 forms a Glycyl lysine isopeptide (Lys-Gly) (interchain with G-Cter in SUMO2); alternate linkage. The tract at residues 408–466 is tail; sequence ESRIALPLPNFSSLNLRETNLDSLPLVDTHSKRTLLIKTVETRDGQVINETSQHHDDLE. 3 positions are modified to phosphoserine: Ser409, Ser419, and Ser420. Thr426 carries the phosphothreonine modification. Ser430 carries the phosphoserine modification. Thr436 bears the Phosphothreonine mark. Ser438 carries the phosphoserine modification. Residue Lys439 forms a Glycyl lysine isopeptide (Lys-Gly) (interchain with G-Cter in SUMO2) linkage. At Lys445 the chain carries N6-acetyllysine; alternate. Lys445 carries the post-translational modification N6-succinyllysine; alternate. A Glycyl lysine isopeptide (Lys-Gly) (interchain with G-Cter in SUMO2); alternate cross-link involves residue Lys445. Lys445 is covalently cross-linked (Glycyl lysine isopeptide (Lys-Gly) (interchain with G-Cter in SUMO1); alternate). Phosphothreonine occurs at positions 446 and 458. Ser459 is modified (phosphoserine).

It belongs to the intermediate filament family. In terms of assembly, homomer assembled from elementary dimers. Identified in complexes that contain VIM, EZR, AHNAK, BFSP1, BFSP2, ANK2, PLEC, PRX and spectrin. Interacts with BCAS3. Interacts with LGSN. Interacts with SYNM. Interacts (via rod region) with PLEC (via CH 1 domain). Interacts with STK33. Interacts with LARP6. Interacts with RAB8B. Interacts with TOR1A; the interaction associates TOR1A with the cytoskeleton. Interacts with TOR1AIP1. Interacts with TOR1AIP1. Interacts with DIAPH1. Interacts with EPPK1; interaction is dependent of higher-order structure of intermediate filament. Interacts with the non-receptor tyrosine kinase SRMS; the interaction leads to phosphorylation of VIM. Interacts with NOD2. Interacts (via head region) with CORO1C. Interacts with HDGF. Interacts with PRKCE (via phorbol-ester/DAG-type 2 domain). Interacts with BFSP2. Interacts with PPL. Interacts with PKP1 and PKP2. Interacts with SCRIB (via PDZ domains); the interaction protects SCRIB from proteasomal degradation and facilitates SCRIB localization to intermediate filaments, the interaction is reduced by cell contact inhibition. In terms of processing, filament disassembly during mitosis is promoted by phosphorylation at Ser-55 as well as by nestin. One of the most prominent phosphoproteins in various cells of mesenchymal origin. Phosphorylation is enhanced during cell division, at which time vimentin filaments are significantly reorganized. Phosphorylation by PKN1 inhibits the formation of filaments. Phosphorylated at Ser-56 by CDK5 during neutrophil secretion in the cytoplasm. Phosphorylated by STK33. Phosphorylated on tyrosine residues by SRMS. Post-translationally, O-glycosylated during cytokinesis at sites identical or close to phosphorylation sites, this interferes with the phosphorylation status. S-nitrosylation is induced by interferon-gamma and oxidatively-modified low-densitity lipoprotein (LDL(ox)) possibly implicating the iNOS-S100A8/9 transnitrosylase complex.

It is found in the cytoplasm. The protein resides in the cytoskeleton. Its subcellular location is the nucleus matrix. The protein localises to the cell membrane. In terms of biological role, vimentins are class-III intermediate filaments found in various non-epithelial cells, especially mesenchymal cells. Vimentin is attached to the nucleus, endoplasmic reticulum, and mitochondria, either laterally or terminally. Plays a role in cell directional movement, orientation, cell sheet organization and Golgi complex polarization at the cell migration front. Protects SCRIB from proteasomal degradation and facilitates its localization to intermediate filaments in a cell contact-mediated manner. Its function is as follows. Involved with LARP6 in the stabilization of type I collagen mRNAs for CO1A1 and CO1A2. The protein is Vimentin (VIM) of Canis lupus familiaris (Dog).